The chain runs to 273 residues: Non-homologous end joining protein Ku (273 aa).

One can recognise a Ku domain in the interval alanine 10–lysine 193. The sufficient for interaction with LigD stretch occupies residues phenylalanine 111 to proline 273.

Belongs to the prokaryotic Ku family. In terms of assembly, homodimer. Interacts with LigD.

In terms of biological role, with LigD forms a non-homologous end joining (NHEJ) DNA repair enzyme, which repairs dsDNA breaks with reduced fidelity. Binds linear dsDNA with 5'- and 3'- overhangs but not closed circular dsDNA nor ssDNA. Recruits and stimulates the ligase activity of LigD. This is Non-homologous end joining protein Ku (mku) from Mycobacterium tuberculosis (strain CDC 1551 / Oshkosh).